The following is a 477-amino-acid chain: MKVTLPEFERAGVMVVGDVMLDRYWYGPTSRISPEAPVPVVKVNTIEERPGGAANVAMNIASLGANARLVGLTGIDDAARALSKSLADVNVKCDFVSVPTHPTITKLRVLSRNQQLIRLDFEEGFEGVDPQPLHERINQALSSIGALVLSDYAKGALASVQQMIQLARKAGVPVLIDPKGTDFERYRGATLLTPNLSEFEAVVGKCKTEEEIVERGMKLIADYELSALLVTRSEQGMSLLQPGKAPLHMPTQAQEVYDVTGAGDTVIGVLAATLAAGNSLEEACFFANAAAGVVVGKLGTSTVSPIELENAVRGRADTGFGVMTEEELKLAVAAARKRGEKVVMTNGVFDILHAGHVFYLANARKLGDRLIVAVNSDASTKRLKGDSRPVNPLEQRMIVLGALEAVDWVVSFEEDTPQRLIAGILPDLLVKGGDYKPEEIAGSKEVWANGGEVLVLNFEDGCSTTNIIKKIQQDKKG.

The tract at residues 1-318 (MKVTLPEFER…ENAVRGRADT (318 aa)) is ribokinase. Lys-179 bears the N6-acetyllysine mark. An ATP-binding site is contributed by 195 to 198 (NLSE). Asp-264 is a catalytic residue. Residues 344–477 (MTNGVFDILH…IKKIQQDKKG (134 aa)) are cytidylyltransferase.

In the N-terminal section; belongs to the carbohydrate kinase PfkB family. This sequence in the C-terminal section; belongs to the cytidylyltransferase family. Homodimer.

The catalysed reaction is D-glycero-beta-D-manno-heptose 7-phosphate + ATP = D-glycero-beta-D-manno-heptose 1,7-bisphosphate + ADP + H(+). It carries out the reaction D-glycero-beta-D-manno-heptose 1-phosphate + ATP + H(+) = ADP-D-glycero-beta-D-manno-heptose + diphosphate. Its pathway is nucleotide-sugar biosynthesis; ADP-L-glycero-beta-D-manno-heptose biosynthesis; ADP-L-glycero-beta-D-manno-heptose from D-glycero-beta-D-manno-heptose 7-phosphate: step 1/4. It functions in the pathway nucleotide-sugar biosynthesis; ADP-L-glycero-beta-D-manno-heptose biosynthesis; ADP-L-glycero-beta-D-manno-heptose from D-glycero-beta-D-manno-heptose 7-phosphate: step 3/4. Catalyzes the phosphorylation of D-glycero-D-manno-heptose 7-phosphate at the C-1 position to selectively form D-glycero-beta-D-manno-heptose-1,7-bisphosphate. In terms of biological role, catalyzes the ADP transfer from ATP to D-glycero-beta-D-manno-heptose 1-phosphate, yielding ADP-D-glycero-beta-D-manno-heptose. The polypeptide is Bifunctional protein HldE (Shigella flexneri serotype 5b (strain 8401)).